The following is a 434-amino-acid chain: MQVSVETTQGLGRRVTITVAADIIESAVKSELVNAAKKVRIDGFRKGKVPMNVVAQRYGASVRQDVLGDLMQRNFVDAIIKEKINPVGAPNYTPGEYAVGGDFTYTVEFDVYPEVELKGLEAIEVEKPVVEVTDADVDTMLDTLRKQQATWKETDRAATAEDRATIDFTGSIDGEVFEGGKASDFVLAMGQSRMIPGFEDGIVGHKAGEEFTINVNFPEDYHAENLKGKAAQFVIVLKKVEERELPELTEEFIKRFGVADGSQEGLRAEVRKNMERELKGAVRNRVKTQVLDGLINANDIEVPVALIDGEIDVLRRQAAQRFGGNEKQALELPRELFEEQAKRRVVIGLLLGEVISSNELKADEARVNVLIEEMASAYEDPQEVIEFYSKNKELLNNMRNVALEEQAVETVLAKAKVVEKSVSFNELMNQTTTA.

The PPIase FKBP-type domain occupies 161 to 246 (EDRATIDFTG…LKKVEERELP (86 aa)).

It belongs to the FKBP-type PPIase family. Tig subfamily.

Its subcellular location is the cytoplasm. The enzyme catalyses [protein]-peptidylproline (omega=180) = [protein]-peptidylproline (omega=0). Its function is as follows. Involved in protein export. Acts as a chaperone by maintaining the newly synthesized protein in an open conformation. Functions as a peptidyl-prolyl cis-trans isomerase. This is Trigger factor from Pectobacterium atrosepticum (strain SCRI 1043 / ATCC BAA-672) (Erwinia carotovora subsp. atroseptica).